We begin with the raw amino-acid sequence, 348 residues long: Dihydroorotase (348 aa).

The Zn(2+) site is built by H17 and H19. Substrate contacts are provided by residues 19–21 and N45; that span reads HLR. Residues K103, H140, and H178 each coordinate Zn(2+). K103 bears the N6-carboxylysine mark. H140 contributes to the substrate binding site. L223 contacts substrate. D251 serves as a coordination point for Zn(2+). Residue D251 is part of the active site. H255 and A267 together coordinate substrate.

This sequence belongs to the metallo-dependent hydrolases superfamily. DHOase family. Class II DHOase subfamily. In terms of assembly, homodimer. It depends on Zn(2+) as a cofactor.

The catalysed reaction is (S)-dihydroorotate + H2O = N-carbamoyl-L-aspartate + H(+). Its pathway is pyrimidine metabolism; UMP biosynthesis via de novo pathway; (S)-dihydroorotate from bicarbonate: step 3/3. Catalyzes the reversible cyclization of carbamoyl aspartate to dihydroorotate. In Salmonella typhimurium (strain LT2 / SGSC1412 / ATCC 700720), this protein is Dihydroorotase.